A 352-amino-acid polypeptide reads, in one-letter code: Thymidine kinase (352 aa).

Position 26-33 (26-33) interacts with ATP; it reads GSMGIGKT. Catalysis depends on Glu-54, which acts as the Proton acceptor. Gln-95 is a substrate binding site. Arg-185 provides a ligand contact to ATP. Position 191 (Arg-191) interacts with substrate.

This sequence belongs to the herpesviridae thymidine kinase family. Homodimer.

The catalysed reaction is thymidine + ATP = dTMP + ADP + H(+). Catalyzes the transfer of the gamma-phospho group of ATP to thymidine to generate dTMP in the salvage pathway of pyrimidine synthesis. The dTMP serves as a substrate for DNA polymerase during viral DNA replication. Allows the virus to be reactivated and to grow in non-proliferative cells lacking a high concentration of phosphorylated nucleic acid precursors. The protein is Thymidine kinase of Gallid herpesvirus 2 (strain Chicken/Md5/ATCC VR-987) (GaHV-2).